Here is a 354-residue protein sequence, read N- to C-terminus: Uroporphyrinogen decarboxylase (354 aa).

Residues Arg27–Arg31, Asp77, Tyr153, Thr208, and His326 contribute to the substrate site.

This sequence belongs to the uroporphyrinogen decarboxylase family. Homodimer.

The protein resides in the cytoplasm. It catalyses the reaction uroporphyrinogen III + 4 H(+) = coproporphyrinogen III + 4 CO2. Its pathway is porphyrin-containing compound metabolism; protoporphyrin-IX biosynthesis; coproporphyrinogen-III from 5-aminolevulinate: step 4/4. Functionally, catalyzes the decarboxylation of four acetate groups of uroporphyrinogen-III to yield coproporphyrinogen-III. The sequence is that of Uroporphyrinogen decarboxylase from Neisseria meningitidis serogroup C / serotype 2a (strain ATCC 700532 / DSM 15464 / FAM18).